The following is a 290-amino-acid chain: Shikimate dehydrogenase (NADP(+)) (290 aa).

Residues 19 to 21 (SLS) and serine 65 contribute to the shikimate site. Catalysis depends on lysine 69, which acts as the Proton acceptor. Residues asparagine 90 and aspartate 105 each coordinate shikimate. Residues 129 to 133 (GAGGA) and leucine 231 contribute to the NADP(+) site. Tyrosine 233 is a shikimate binding site. Glycine 254 serves as a coordination point for NADP(+).

This sequence belongs to the shikimate dehydrogenase family. As to quaternary structure, homodimer.

It carries out the reaction shikimate + NADP(+) = 3-dehydroshikimate + NADPH + H(+). It participates in metabolic intermediate biosynthesis; chorismate biosynthesis; chorismate from D-erythrose 4-phosphate and phosphoenolpyruvate: step 4/7. Functionally, involved in the biosynthesis of the chorismate, which leads to the biosynthesis of aromatic amino acids. Catalyzes the reversible NADPH linked reduction of 3-dehydroshikimate (DHSA) to yield shikimate (SA). This Latilactobacillus sakei subsp. sakei (strain 23K) (Lactobacillus sakei subsp. sakei) protein is Shikimate dehydrogenase (NADP(+)).